Reading from the N-terminus, the 248-residue chain is PF03932 family protein CutC (248 aa).

Belongs to the CutC family. Homodimer.

Its subcellular location is the cytoplasm. The sequence is that of PF03932 family protein CutC from Escherichia coli O157:H7.